Consider the following 950-residue polypeptide: Zinc finger CCCH domain-containing protein 3 (950 aa).

Disordered regions lie at residues 32–106 (GNSS…HPEP), 127–182 (IKPP…TKVG), 201–220 (VVKSVGRVSDSSPEHRRTVS), and 314–489 (SEKS…VLRK). A compositionally biased stretch (basic residues) spans 56 to 74 (RPSRRGFSSHHGPSWRKKY). Over residues 76 to 96 (LVNQPVESSDPASDPAFQTSL) the composition is skewed to polar residues. Polar residues predominate over residues 327 to 338 (PRTTLESGNKAT). Residues 344-360 (KTEKPQPKVDPEVRPEK) are compositionally biased toward basic and acidic residues. Low complexity predominate over residues 370–388 (SPSKYKWKASSPSASSSSS). Residues 402–412 (SQLSPVPSRPT) show a composition bias toward polar residues. A Phosphoserine modification is found at Ser405. Basic residues predominate over residues 438 to 449 (VKSRTKIIRRRG). The span at 460-470 (SPTTATTSKNH) shows a compositional bias: polar residues. C3H1-type zinc fingers lie at residues 662-690 (EKKREYCMYYNRFGRCNRGECCPYIHDPE), 694-717 (VCTRFVRGTCKKTDGSCPFSHHVS), 718-744 (KEKMPVCSYFLKGICSNSNCPYSHVYV), 745-772 (SRKAEVCSDFLKGYCPLGAKCKKKHTLL), and 773-795 (CPDFARRGICPRGSQCQLLHRNQ). The disordered stretch occupies residues 793–950 (RNQKRHGRRT…GKPLHIKPRL (158 aa)). Polar residues predominate over residues 828–838 (PTTTQRSVRQM). The span at 839–849 (SSGLASGAEAP) shows a compositional bias: low complexity. A phosphoserine mark is found at Ser851 and Ser855. Residues 857 to 888 (RVLASTSTLSSKATAASSPSPSPSTSSPAPSL) show a composition bias toward low complexity. The segment covering 914–928 (SLHSSPSPGGQTETG) has biased composition (polar residues). Phosphoserine occurs at positions 918, 920, and 934.

In terms of assembly, interacts with SMAD1, SMAD3, SMAD4, CPSF2 and CPSF3.

Its subcellular location is the nucleus. Required for the export of polyadenylated mRNAs from the nucleus. Enhances ACVR1B-induced SMAD-dependent transcription. Binds to single-stranded DNA but not to double-stranded DNA in vitro. Involved in RNA cleavage. The sequence is that of Zinc finger CCCH domain-containing protein 3 (Zc3h3) from Mus musculus (Mouse).